We begin with the raw amino-acid sequence, 357 residues long: Glucose-6-phosphatase catalytic subunit 1 (357 aa).

Topologically, residues 1–28 (MEKGMDVLHDFGIQSTHYLQVNYQDSQD) are lumenal. Residues 29-49 (WFILVSVIADLRNAFYVLFPI) form a helical membrane-spanning segment. At 50-60 (WFHLREAVGIK) the chain is on the cytoplasmic side. Residues 61-81 (LLWVAVIGDWLNLVFKWILFG) form a helical membrane-spanning segment. Topologically, residues 82-117 (QRPYWWVMDTDYYSNTSVPLIKQFPVTCETGPGSPS) are lumenal. Arginine 83 contacts substrate. An N-linked (GlcNAc...) asparagine glycan is attached at asparagine 96. Residues 118–138 (GHAMGTAGVYYVMVTSTLSIF) form a helical membrane-spanning segment. Histidine 119 acts as the Proton donor in catalysis. Residues 139 to 147 (RGRKRPTYR) lie on the Cytoplasmic side of the membrane. The chain crosses the membrane as a helical span at residues 148 to 168 (FRCLNILLWLGFWAVQLNVCL). Topologically, residues 169–170 (SR) are lumenal. Arginine 170 contacts substrate. A helical membrane pass occupies residues 171 to 191 (IYLAAHFPHQVVAGVLSGIAV). Histidine 176 acts as the Nucleophile in catalysis. Over 192-209 (AETFRHIQSIYNASLKKY) the chain is Cytoplasmic. Residues 210–230 (FLITFFLFSFAIGFYLLLKGL) traverse the membrane as a helical segment. The Lumenal portion of the chain corresponds to 231-254 (GVDLLWTLEKARRWCERPEWVHID). Residues 255-275 (TTPFASLLKNVGTLFGLGVTL) traverse the membrane as a helical segment. At 276–291 (NSSMYRESCKGKLSKW) the chain is on the cytoplasmic side. Residues 292-312 (FPFRLSCIVVSLILLHLFDSL) form a helical membrane-spanning segment. Residues 313–320 (KPPSQTEL) are Lumenal-facing. Residues 321–341 (IFYTLSFCKSAAVPLASVSLI) form a helical membrane-spanning segment. Residues 342–357 (PYCLARVFDQPDKKSL) are Cytoplasmic-facing. Residues 354–357 (KKSL) carry the Prevents secretion from ER motif.

This sequence belongs to the glucose-6-phosphatase family.

It localises to the endoplasmic reticulum membrane. It carries out the reaction D-glucose 6-phosphate + H2O = D-glucose + phosphate. Its pathway is carbohydrate biosynthesis; gluconeogenesis. Its function is as follows. Hydrolyzes glucose-6-phosphate to glucose in the endoplasmic reticulum. Forms with the glucose-6-phosphate transporter (SLC37A4/G6PT) the complex responsible for glucose production in the terminal step of glycogenolysis and gluconeogenesis. Hence, it is the key enzyme in homeostatic regulation of blood glucose levels. The protein is Glucose-6-phosphatase catalytic subunit 1 (G6PC1) of Canis lupus familiaris (Dog).